Reading from the N-terminus, the 544-residue chain is Chaperonin GroEL 2 (544 aa).

ATP contacts are provided by residues 29–32, 86–90, Gly413, 479–481, and Asp495; these read TLGP, DGTTT, and NAA.

This sequence belongs to the chaperonin (HSP60) family. As to quaternary structure, forms a cylinder of 14 subunits composed of two heptameric rings stacked back-to-back. Interacts with the co-chaperonin GroES.

Its subcellular location is the cytoplasm. The enzyme catalyses ATP + H2O + a folded polypeptide = ADP + phosphate + an unfolded polypeptide.. In terms of biological role, together with its co-chaperonin GroES, plays an essential role in assisting protein folding. The GroEL-GroES system forms a nano-cage that allows encapsulation of the non-native substrate proteins and provides a physical environment optimized to promote and accelerate protein folding. In Synechococcus sp. (strain WH7803), this protein is Chaperonin GroEL 2.